The primary structure comprises 564 residues: 2-succinyl-5-enolpyruvyl-6-hydroxy-3-cyclohexene-1-carboxylate synthase (564 aa).

The protein belongs to the TPP enzyme family. MenD subfamily. Homodimer. Requires Mg(2+) as cofactor. It depends on Mn(2+) as a cofactor. Thiamine diphosphate serves as cofactor.

It catalyses the reaction isochorismate + 2-oxoglutarate + H(+) = 5-enolpyruvoyl-6-hydroxy-2-succinyl-cyclohex-3-ene-1-carboxylate + CO2. It participates in quinol/quinone metabolism; 1,4-dihydroxy-2-naphthoate biosynthesis; 1,4-dihydroxy-2-naphthoate from chorismate: step 2/7. Its pathway is quinol/quinone metabolism; menaquinone biosynthesis. Its function is as follows. Catalyzes the thiamine diphosphate-dependent decarboxylation of 2-oxoglutarate and the subsequent addition of the resulting succinic semialdehyde-thiamine pyrophosphate anion to isochorismate to yield 2-succinyl-5-enolpyruvyl-6-hydroxy-3-cyclohexene-1-carboxylate (SEPHCHC). The protein is 2-succinyl-5-enolpyruvyl-6-hydroxy-3-cyclohexene-1-carboxylate synthase of Vibrio vulnificus (strain CMCP6).